We begin with the raw amino-acid sequence, 187 residues long: Large ribosomal subunit protein uL6 (187 aa).

This sequence belongs to the universal ribosomal protein uL6 family. Part of the 50S ribosomal subunit.

Its function is as follows. This protein binds to the 23S rRNA, and is important in its secondary structure. It is located near the subunit interface in the base of the L7/L12 stalk, and near the tRNA binding site of the peptidyltransferase center. In Thermosynechococcus vestitus (strain NIES-2133 / IAM M-273 / BP-1), this protein is Large ribosomal subunit protein uL6.